The chain runs to 358 residues: uncharacterized protein (358 aa).

The N-terminal stretch at 1 to 15 (MITGKTISLPLSVIA) is a signal peptide. The N-palmitoyl cysteine moiety is linked to residue Cys16. Cys16 is lipidated: S-diacylglycerol cysteine. A disordered region spans residues 331–358 (PCGTGSPGNPPPNINSVAQHRISTNTNR). Positions 347-358 (VAQHRISTNTNR) are enriched in polar residues.

It localises to the cell membrane. This is an uncharacterized protein from Sinorhizobium fredii (strain NBRC 101917 / NGR234).